A 926-amino-acid chain; its full sequence is ABC transporter A family member 6 (926 aa).

A run of 6 helical transmembrane segments spans residues Leu-34–Ser-54, Ala-336–Leu-356, Phe-389–Leu-409, Thr-418–Val-438, Val-451–Ile-471, and Asp-525–Ile-545. The ABC transporter domain maps to Ile-610–Thr-847. Gly-648–Thr-655 lines the ATP pocket.

The protein belongs to the ABC transporter superfamily. ABCA family. CPR flippase (TC 3.A.1.211) subfamily.

It localises to the membrane. The polypeptide is ABC transporter A family member 6 (ABCA6) (Arabidopsis thaliana (Mouse-ear cress)).